A 732-amino-acid polypeptide reads, in one-letter code: Probable ATP-dependent RNA helicase DHX35 homolog (732 aa).

Residues 1 to 50 are disordered; sequence MSYHPGHGHRQEPRKGAGARRGFARPDDSADAPRTGPLIFEERSTENAGA. The region spanning 87 to 251 is the Helicase ATP-binding domain; the sequence is LYMCERYRTI…FEMNETGNSD (165 aa). An ATP-binding site is contributed by 100-107; the sequence is GETGCGKS. The DEAH box signature appears at 198–201; it reads DEAH. One can recognise a Helicase C-terminal domain in the interval 283–457; sequence AVDTVINIHK…STILQLKALG (175 aa).

It belongs to the DEAD box helicase family. DEAH subfamily.

The enzyme catalyses ATP + H2O = ADP + phosphate + H(+). In Caenorhabditis elegans, this protein is Probable ATP-dependent RNA helicase DHX35 homolog.